Here is a 205-residue protein sequence, read N- to C-terminus: Methyltransferase-like 26 B (205 aa).

Belongs to the UPF0585 family.

This Danio rerio (Zebrafish) protein is Methyltransferase-like 26 B.